The sequence spans 207 residues: ATP synthase subunit 5, mitochondrial (207 aa).

Belongs to the ATPase delta chain family. In terms of assembly, F-type ATPases have 2 components, CF(1) - the catalytic core - and CF(0) - the membrane proton channel. CF(1) has five subunits: alpha(3), beta(3), gamma(1), delta(1), epsilon(1). CF(0) has three main subunits: a, b and c.

The protein resides in the mitochondrion. Its subcellular location is the mitochondrion inner membrane. Mitochondrial membrane ATP synthase (F(1)F(0) ATP synthase or Complex V) produces ATP from ADP in the presence of a proton gradient across the membrane which is generated by electron transport complexes of the respiratory chain. F-type ATPases consist of two structural domains, F(1) - containing the extramembraneous catalytic core and F(0) - containing the membrane proton channel, linked together by a central stalk and a peripheral stalk. During catalysis, ATP synthesis in the catalytic domain of F(1) is coupled via a rotary mechanism of the central stalk subunits to proton translocation. Part of the complex F(0) domain and the peripheric stalk, which acts as a stator to hold the catalytic alpha(3)beta(3) subcomplex and subunit a/ATP6 static relative to the rotary elements. This chain is ATP synthase subunit 5, mitochondrial (ATP5), found in Eremothecium gossypii (strain ATCC 10895 / CBS 109.51 / FGSC 9923 / NRRL Y-1056) (Yeast).